A 130-amino-acid polypeptide reads, in one-letter code: Small ribosomal subunit protein uS9 (130 aa).

The protein belongs to the universal ribosomal protein uS9 family.

This Paraburkholderia phytofirmans (strain DSM 17436 / LMG 22146 / PsJN) (Burkholderia phytofirmans) protein is Small ribosomal subunit protein uS9.